We begin with the raw amino-acid sequence, 1030 residues long: Carbamoyl phosphate synthase arginine-specific large chain (1030 aa).

Residues 1 to 401 (MPKDTSISSI…AIQKAAASLE (401 aa)) form a carboxyphosphate synthetic domain region. Arginine 129, arginine 169, glycine 175, glycine 176, lysine 208, isoleucine 210, glutamate 215, glycine 241, valine 242, histidine 243, glutamine 284, and glutamate 298 together coordinate ATP. The region spanning 133–327 (RSLMNELKQP…IAKMAAKLAV (195 aa)) is the ATP-grasp 1 domain. Mg(2+) is bound by residues glutamine 284, glutamate 298, and asparagine 300. Mn(2+) contacts are provided by glutamine 284, glutamate 298, and asparagine 300. Residues 402–548 (LKNIGTHLPE…YSTYFGETDG (147 aa)) are oligomerization domain. Residues 549 to 928 (DISRKEKKRA…ALKKIYTRVW (380 aa)) form a carbamoyl phosphate synthetic domain region. The ATP-grasp 2 domain maps to 675–863 (YQLLDELGLK…MIPLATRLLA (189 aa)). Positions 711, 748, 750, 754, 779, 780, 781, 782, 822, and 834 each coordinate ATP. Mg(2+) is bound by residues glutamine 822, glutamate 834, and asparagine 836. The Mn(2+) site is built by glutamine 822, glutamate 834, and asparagine 836. Positions 925 to 1027 (TRVWSQKGSI…KDLYKKEVAS (103 aa)) constitute an MGS-like domain. An allosteric domain region spans residues 929–1030 (SQKGSIYLQN…YKKEVASCTQ (102 aa)).

This sequence belongs to the CarB family. Composed of two chains; the small (or glutamine) chain promotes the hydrolysis of glutamine to ammonia, which is used by the large (or ammonia) chain to synthesize carbamoyl phosphate. Tetramer of heterodimers (alpha,beta)4. It depends on Mg(2+) as a cofactor. Mn(2+) serves as cofactor.

The catalysed reaction is hydrogencarbonate + L-glutamine + 2 ATP + H2O = carbamoyl phosphate + L-glutamate + 2 ADP + phosphate + 2 H(+). The enzyme catalyses hydrogencarbonate + NH4(+) + 2 ATP = carbamoyl phosphate + 2 ADP + phosphate + 2 H(+). Its pathway is amino-acid biosynthesis; L-arginine biosynthesis; carbamoyl phosphate from bicarbonate: step 1/1. Functionally, large subunit of the glutamine-dependent carbamoyl phosphate synthetase (CPSase). CPSase catalyzes the formation of carbamoyl phosphate from the ammonia moiety of glutamine, carbonate, and phosphate donated by ATP, constituting the first step of the biosynthetic pathway leading to arginine and/or urea. The large subunit (synthetase) binds the substrates ammonia (free or transferred from glutamine from the small subunit), hydrogencarbonate and ATP and carries out an ATP-coupled ligase reaction, activating hydrogencarbonate by forming carboxy phosphate which reacts with ammonia to form carbamoyl phosphate. In Bacillus subtilis (strain 168), this protein is Carbamoyl phosphate synthase arginine-specific large chain.